The chain runs to 138 residues: Low molecular weight protein-tyrosine-phosphatase PtpB (138 aa).

Cys-7 serves as the catalytic Nucleophile. The active site involves Arg-13. Asp-111 serves as the catalytic Proton donor.

This sequence belongs to the low molecular weight phosphotyrosine protein phosphatase family.

It carries out the reaction O-phospho-L-tyrosyl-[protein] + H2O = L-tyrosyl-[protein] + phosphate. Its function is as follows. Dephosphorylates the phosphotyrosine-containing proteins. This chain is Low molecular weight protein-tyrosine-phosphatase PtpB (ptpB), found in Staphylococcus haemolyticus (strain JCSC1435).